Reading from the N-terminus, the 257-residue chain is Deoxyribose-phosphate aldolase (257 aa).

Residue aspartate 102 is the Proton donor/acceptor of the active site. Residue lysine 166 is the Schiff-base intermediate with acetaldehyde of the active site. Lysine 198 functions as the Proton donor/acceptor in the catalytic mechanism.

It belongs to the DeoC/FbaB aldolase family. DeoC type 2 subfamily.

Its subcellular location is the cytoplasm. It catalyses the reaction 2-deoxy-D-ribose 5-phosphate = D-glyceraldehyde 3-phosphate + acetaldehyde. It functions in the pathway carbohydrate degradation; 2-deoxy-D-ribose 1-phosphate degradation; D-glyceraldehyde 3-phosphate and acetaldehyde from 2-deoxy-alpha-D-ribose 1-phosphate: step 2/2. Functionally, catalyzes a reversible aldol reaction between acetaldehyde and D-glyceraldehyde 3-phosphate to generate 2-deoxy-D-ribose 5-phosphate. In Shewanella amazonensis (strain ATCC BAA-1098 / SB2B), this protein is Deoxyribose-phosphate aldolase.